Reading from the N-terminus, the 319-residue chain is Acetyl-coenzyme A carboxylase carboxyl transferase subunit alpha (319 aa).

Residues asparagine 35–aspartate 296 enclose the CoA carboxyltransferase C-terminal domain.

It belongs to the AccA family. In terms of assembly, acetyl-CoA carboxylase is a heterohexamer composed of biotin carboxyl carrier protein (AccB), biotin carboxylase (AccC) and two subunits each of ACCase subunit alpha (AccA) and ACCase subunit beta (AccD).

It is found in the cytoplasm. It carries out the reaction N(6)-carboxybiotinyl-L-lysyl-[protein] + acetyl-CoA = N(6)-biotinyl-L-lysyl-[protein] + malonyl-CoA. It participates in lipid metabolism; malonyl-CoA biosynthesis; malonyl-CoA from acetyl-CoA: step 1/1. Component of the acetyl coenzyme A carboxylase (ACC) complex. First, biotin carboxylase catalyzes the carboxylation of biotin on its carrier protein (BCCP) and then the CO(2) group is transferred by the carboxyltransferase to acetyl-CoA to form malonyl-CoA. In Shigella sonnei (strain Ss046), this protein is Acetyl-coenzyme A carboxylase carboxyl transferase subunit alpha.